The chain runs to 476 residues: Glycogen synthase (476 aa).

Lys15 serves as a coordination point for ADP-alpha-D-glucose.

Belongs to the glycosyltransferase 1 family. Bacterial/plant glycogen synthase subfamily.

The catalysed reaction is [(1-&gt;4)-alpha-D-glucosyl](n) + ADP-alpha-D-glucose = [(1-&gt;4)-alpha-D-glucosyl](n+1) + ADP + H(+). It participates in glycan biosynthesis; glycogen biosynthesis. Synthesizes alpha-1,4-glucan chains using ADP-glucose. The chain is Glycogen synthase from Streptococcus gordonii (strain Challis / ATCC 35105 / BCRC 15272 / CH1 / DL1 / V288).